The following is a 408-amino-acid chain: UDP-N-acetylglucosamine--dolichyl-phosphate N-acetylglucosaminephosphotransferase (408 aa).

Topologically, residues 1 to 10 (MWAFPELPMP) are lumenal. A helical membrane pass occupies residues 11–38 (LLVNLIGSLMGFVATVTLIPAFRGHFIA). Residues 39–58 (ARLCGQDLNKSSREQIPESQ) are Cytoplasmic-facing. UDP-N-acetyl-alpha-D-glucosamine contacts are provided by residues 44–46 (QDL) and glutamate 56. A helical membrane pass occupies residues 59–78 (GVISGAVFLIILFCFIPFPF). Residues 79–91 (LNCFVEQQCKAFP) lie on the Lumenal side of the membrane. Residues 92 to 118 (HHEFVALIGALLAICCMIFLGFADDVL) form a helical membrane-spanning segment. At 119-121 (NLR) the chain is on the cytoplasmic side. The chain crosses the membrane as a helical span at residues 122-143 (WRHKLLLPTAASLPLLMVYFTN). Lysine 125 is a binding site for dolichyl phosphate. The Lumenal portion of the chain corresponds to 144 to 166 (FGNTTIVVPKPLRPILGLHLDLG). Asparagine 146 carries N-linked (GlcNAc...) asparagine glycosylation. The chain crosses the membrane as a helical span at residues 167–186 (ILYYVYMGLLAVFCTNAINI). 178–186 (VFCTNAINI) is a dolichyl phosphate binding site. Asparagine 185 contacts Mg(2+). Topologically, residues 187 to 192 (LAGING) are cytoplasmic. UDP-N-acetyl-alpha-D-glucosamine is bound at residue asparagine 191. The helical transmembrane segment at 193 to 213 (LEAGQSLVISASIIVFNLVEL) threads the bilayer. Residues 214-218 (DGDYR) are Lumenal-facing. Residues 219–242 (DDHIFSLYFMIPFFFTTLGLLYHN) traverse the membrane as a helical segment. Residues 243–250 (WYPSRVFV) lie on the Cytoplasmic side of the membrane. The chain crosses the membrane as a helical span at residues 251 to 269 (GDTFCYFAGMTFAVVGILG). Mg(2+) is bound at residue aspartate 252. The Lumenal segment spans residues 270 to 271 (HF). The chain crosses the membrane as a helical span at residues 272-293 (SKTMLLFFMPQVFNFLYSLPQL). The Cytoplasmic segment spans residues 294 to 375 (LHIIPCPRHR…LLLKVFGPMH (82 aa)). 301–303 (RHR) lines the UDP-N-acetyl-alpha-D-glucosamine pocket. Residues 376 to 400 (ERNLTLLLLLLQVVGSAVTFSIRYQ) traverse the membrane as a helical segment. Topologically, residues 401–408 (LVRLFYDV) are lumenal.

The protein belongs to the glycosyltransferase 4 family. As to quaternary structure, homodimer. Mg(2+) serves as cofactor.

It localises to the endoplasmic reticulum membrane. The enzyme catalyses a di-trans,poly-cis-dolichyl phosphate + UDP-N-acetyl-alpha-D-glucosamine = an N-acetyl-alpha-D-glucosaminyl-diphospho-di-trans,poly-cis-dolichol + UMP. It participates in protein modification; protein glycosylation. Inhibited by natural nucleoside antibiotic tunicamycin, which acts as a structural analog and competitor of UDP-GlcNAc. Activated by Man-P-Dol. Activated by manganese. Inhibited by diumycin. Functionally, UDP-N-acetylglucosamine--dolichyl-phosphate N-acetylglucosaminephosphotransferase that operates in the biosynthetic pathway of dolichol-linked oligosaccharides, the glycan precursors employed in protein asparagine (N)-glycosylation. The assembly of dolichol-linked oligosaccharides begins on the cytosolic side of the endoplasmic reticulum membrane and finishes in its lumen. The sequential addition of sugars to dolichol pyrophosphate produces dolichol-linked oligosaccharides containing fourteen sugars, including two GlcNAcs, nine mannoses and three glucoses. Once assembled, the oligosaccharide is transferred from the lipid to nascent proteins by oligosaccharyltransferases. Catalyzes the initial step of dolichol-linked oligosaccharide biosynthesis, transfering GlcNAc-1-P from cytosolic UDP-GlcNAc onto the carrier lipid dolichyl phosphate (P-dolichol), yielding GlcNAc-P-P-dolichol embedded in the cytoplasmic leaflet of the endoplasmic reticulum membrane. In Bos taurus (Bovine), this protein is UDP-N-acetylglucosamine--dolichyl-phosphate N-acetylglucosaminephosphotransferase.